Reading from the N-terminus, the 261-residue chain is Indole-3-glycerol phosphate synthase (261 aa).

This sequence belongs to the TrpC family.

It catalyses the reaction 1-(2-carboxyphenylamino)-1-deoxy-D-ribulose 5-phosphate + H(+) = (1S,2R)-1-C-(indol-3-yl)glycerol 3-phosphate + CO2 + H2O. The protein operates within amino-acid biosynthesis; L-tryptophan biosynthesis; L-tryptophan from chorismate: step 4/5. The polypeptide is Indole-3-glycerol phosphate synthase (Alkaliphilus metalliredigens (strain QYMF)).